The sequence spans 204 residues: uncharacterized protein (204 aa).

6 helical membrane-spanning segments follow: residues 19–39 (TANP…LLNL), 42–62 (AGLF…GGIA), 78–98 (GTVA…LLVI), 116–136 (PVAM…MFIA), 143–163 (GIQV…AGEI), and 167–187 (ALIT…AMYV).

This sequence belongs to the acetate uptake transporter (AceTr) (TC 2.A.96) family.

It localises to the cell membrane. This is an uncharacterized protein from Methanothermobacter thermautotrophicus (strain ATCC 29096 / DSM 1053 / JCM 10044 / NBRC 100330 / Delta H) (Methanobacterium thermoautotrophicum).